The following is a 136-amino-acid chain: Large ribosomal subunit protein uL3 (136 aa).

Residue Gln-83 is modified to N5-methylglutamine.

Belongs to the universal ribosomal protein uL3 family. As to quaternary structure, part of the 50S ribosomal subunit. Forms a cluster with proteins L14 and L19. Post-translationally, methylated by PrmB.

Its function is as follows. One of the primary rRNA binding proteins, it binds directly near the 3'-end of the 23S rRNA, where it nucleates assembly of the 50S subunit. This is Large ribosomal subunit protein uL3 (rplC) from Carsonella ruddii.